The chain runs to 136 residues: Protein NrdI (136 aa).

It belongs to the NrdI family.

In terms of biological role, probably involved in ribonucleotide reductase function. The polypeptide is Protein NrdI (Shigella dysenteriae serotype 1 (strain Sd197)).